The chain runs to 114 residues: Probable 4-amino-4-deoxy-L-arabinose-phosphoundecaprenol flippase subunit ArnE (114 aa).

The next 3 helical transmembrane spans lie at 38–58 (LTLR…LLWL), 64–84 (LPLS…TLAA), and 94–114 (LRHW…SWHL). Residues 43 to 112 (LAIAVVSLGL…IIFGILLMSW (70 aa)) form the EamA domain.

The protein belongs to the ArnE family. As to quaternary structure, heterodimer of ArnE and ArnF.

Its subcellular location is the cell inner membrane. The protein operates within bacterial outer membrane biogenesis; lipopolysaccharide biosynthesis. In terms of biological role, translocates 4-amino-4-deoxy-L-arabinose-phosphoundecaprenol (alpha-L-Ara4N-phosphoundecaprenol) from the cytoplasmic to the periplasmic side of the inner membrane. The polypeptide is Probable 4-amino-4-deoxy-L-arabinose-phosphoundecaprenol flippase subunit ArnE (Yersinia pseudotuberculosis serotype O:1b (strain IP 31758)).